The following is a 1095-amino-acid chain: Solute carrier family 12 member 1 (1095 aa).

Residues 1 to 173 (MSVNIPSNSV…EEDVTGVVKF (173 aa)) lie on the Cytoplasmic side of the membrane. Positions 16–19 (RFQV) match the RFXV motif motif. Positions 26 to 45 (HGSGAAMSDSTDPPHYEETS) are disordered. Ser-57 and Ser-87 each carry phosphoserine. A phosphothreonine mark is found at Thr-91, Thr-96, Thr-101, and Thr-114. Position 116 is a phosphoserine (Ser-116). The residue at position 126 (Ser-126) is a Phosphoserine; by AMPK. Ser-144 is subject to Phosphoserine. A helical membrane pass occupies residues 174-194 (GWVKGVLVRCMLNIWGVMLFI). At 195-197 (RLS) the chain is on the extracellular side. Residues 198–218 (WIVGEAGIGLGVIIIGLSVVV) traverse the membrane as a helical segment. Residues 219 to 255 (TTLTGISMSAICTNGVVRGGGAYYLISRSLGPEFGGS) lie on the Cytoplasmic side of the membrane. The helical transmembrane segment at 256 to 276 (IGLIFRFANAVRVAMYVVGFA) threads the bilayer. At 277 to 298 (ETVVDLLKESDSMMVDPTNDIR) the chain is on the extracellular side. A helical transmembrane segment spans residues 299-319 (IIGSITVVILLGISVAGMEWE). The Cytoplasmic portion of the chain corresponds to 320–323 (AKAQ). Residues 324-344 (VILLVILLIGIANFFIGTVIP) traverse the membrane as a helical segment. Topologically, residues 345 to 375 (SNNEKKSRGFFNYQASIFAENFGPSFTEGEG) are extracellular. A helical transmembrane segment spans residues 376-396 (FFSVFAIFFPAATGILAGANI). The Cytoplasmic portion of the chain corresponds to 397-413 (SGDLEDPQDAIPRGTML). A helical transmembrane segment spans residues 414–434 (AIFITTVAYIGVAICVRACVV). Residues 435-546 (RDATGSMNDT…NNEPLRGYFL (112 aa)) lie on the Extracellular side of the membrane. Residues Asn-442 and Asn-452 are each glycosylated (N-linked (GlcNAc...) asparagine). Transmembrane regions (helical) follow at residues 547–567 (TFVIAMAFILIAELNVIAPII) and 568–588 (SNFFLASYALINFSCFHASYA). Over 589–605 (KSPGWRPAYGIYNMWVS) the chain is Extracellular. A helical transmembrane segment spans residues 606-626 (LFGAILCCAVMFVINWWAAVI). The Cytoplasmic segment spans residues 627–1095 (TYVIELFLYI…NHKNVLTFYS (469 aa)).

This sequence belongs to the SLC12A transporter family. In terms of assembly, when phosphorylated, interacts with PPP3CB. Phosphorylated at Ser-87, Thr-96 and Thr-101 by OXSR1/OSR1 and STK39/SPAK downstream of WNK kinases (WNK1, WNK2, WNK3 or WNK4), promoting its activity. In terms of tissue distribution, expressed predominantly in kidney (at protein level).

The protein localises to the apical cell membrane. The catalysed reaction is K(+)(out) + 2 chloride(out) + Na(+)(out) = K(+)(in) + 2 chloride(in) + Na(+)(in). With respect to regulation, activated following phosphorylation by OXSR1/OSR1 and STK39/SPAK downstream of WNK kinases (WNK1, WNK2, WNK3 or WNK4). Its function is as follows. Renal sodium, potassium and chloride ion cotransporter that mediates the transepithelial NaCl reabsorption in the thick ascending limb and plays an essential role in the urinary concentration and volume regulation. Electrically silent transporter system. This is Solute carrier family 12 member 1 (Slc12a1) from Rattus norvegicus (Rat).